Here is a 229-residue protein sequence, read N- to C-terminus: Large ribosomal subunit protein uL1 (229 aa).

The protein belongs to the universal ribosomal protein uL1 family. Part of the 50S ribosomal subunit.

Functionally, binds directly to 23S rRNA. The L1 stalk is quite mobile in the ribosome, and is involved in E site tRNA release. Its function is as follows. Protein L1 is also a translational repressor protein, it controls the translation of the L11 operon by binding to its mRNA. The chain is Large ribosomal subunit protein uL1 from Streptococcus pyogenes serotype M3 (strain SSI-1).